The sequence spans 283 residues: Bis(5'-nucleosyl)-tetraphosphatase, symmetrical (283 aa).

This sequence belongs to the Ap4A hydrolase family.

It catalyses the reaction P(1),P(4)-bis(5'-adenosyl) tetraphosphate + H2O = 2 ADP + 2 H(+). Hydrolyzes diadenosine 5',5'''-P1,P4-tetraphosphate to yield ADP. The sequence is that of Bis(5'-nucleosyl)-tetraphosphatase, symmetrical from Cronobacter sakazakii (strain ATCC BAA-894) (Enterobacter sakazakii).